The sequence spans 515 residues: Integrator complex subunit 14 (515 aa).

The 203-residue stretch at 2–204 (PTVVVMDVSL…KNVQSMFGKL (203 aa)) folds into the VWFA domain. Mg(2+) contacts are provided by serine 10, serine 12, and threonine 86. Lysine 418 bears the N6-acetyllysine mark.

This sequence belongs to the Integrator subunit 14 family. In terms of assembly, component of the Integrator complex, composed of core subunits INTS1, INTS2, INTS3, INTS4, INTS5, INTS6, INTS7, INTS8, INTS9/RC74, INTS10, INTS11/CPSF3L, INTS12, INTS13, INTS14 and INTS15. The core complex associates with protein phosphatase 2A subunits PPP2CA and PPP2R1A, to form the Integrator-PP2A (INTAC) complex. INTS14 is part of the tail subcomplex, composed of INTS10, INTS13, INTS14 and INTS15.

It localises to the nucleus. Functionally, component of the integrator complex, a multiprotein complex that terminates RNA polymerase II (Pol II) transcription in the promoter-proximal region of genes. The integrator complex provides a quality checkpoint during transcription elongation by driving premature transcription termination of transcripts that are unfavorably configured for transcriptional elongation: the complex terminates transcription by (1) catalyzing dephosphorylation of the C-terminal domain (CTD) of Pol II subunit POLR2A/RPB1 and SUPT5H/SPT5, (2) degrading the exiting nascent RNA transcript via endonuclease activity and (3) promoting the release of Pol II from bound DNA. The integrator complex is also involved in terminating the synthesis of non-coding Pol II transcripts, such as enhancer RNAs (eRNAs), small nuclear RNAs (snRNAs), telomerase RNAs and long non-coding RNAs (lncRNAs). Within the integrator complex, INTS14 is part of the integrator tail module that acts as a platform for the recruitment of transcription factors at promoters. The chain is Integrator complex subunit 14 from Mus musculus (Mouse).